A 524-amino-acid polypeptide reads, in one-letter code: CTP synthase (524 aa).

The segment at 1–263 (MKKYVIVTGG…HEKIASKLNV (263 aa)) is amidoligase domain. A CTP-binding site is contributed by S13. UTP is bound at residue S13. Residues 14 to 19 (GIGKGI) and D71 each bind ATP. Residues D71 and E137 each coordinate Mg(2+). CTP-binding positions include 144–146 (DIE), 184–189 (KTKPTQ), and K220. Residues 184 to 189 (KTKPTQ) and K220 contribute to the UTP site. In terms of domain architecture, Glutamine amidotransferase type-1 spans 282-524 (RIALVGKYLG…YLRKVLEGSQ (243 aa)). Residue G342 coordinates L-glutamine. C369 acts as the Nucleophile; for glutamine hydrolysis in catalysis. Residues 370–373 (LGMQ), E393, and R451 contribute to the L-glutamine site. Residues H499 and E501 contribute to the active site.

It belongs to the CTP synthase family. In terms of assembly, homotetramer.

The catalysed reaction is UTP + L-glutamine + ATP + H2O = CTP + L-glutamate + ADP + phosphate + 2 H(+). The enzyme catalyses L-glutamine + H2O = L-glutamate + NH4(+). It carries out the reaction UTP + NH4(+) + ATP = CTP + ADP + phosphate + 2 H(+). The protein operates within pyrimidine metabolism; CTP biosynthesis via de novo pathway; CTP from UDP: step 2/2. Allosterically activated by GTP, when glutamine is the substrate; GTP has no effect on the reaction when ammonia is the substrate. The allosteric effector GTP functions by stabilizing the protein conformation that binds the tetrahedral intermediate(s) formed during glutamine hydrolysis. Inhibited by the product CTP, via allosteric rather than competitive inhibition. Its function is as follows. Catalyzes the ATP-dependent amination of UTP to CTP with either L-glutamine or ammonia as the source of nitrogen. Regulates intracellular CTP levels through interactions with the four ribonucleotide triphosphates. The protein is CTP synthase of Thermotoga maritima (strain ATCC 43589 / DSM 3109 / JCM 10099 / NBRC 100826 / MSB8).